The sequence spans 151 residues: Phosphoribosyl-AMP cyclohydrolase (151 aa).

Residues 1 to 13 (MMTLTFASPPQNK) are compositionally biased toward polar residues. A disordered region spans residues 1–20 (MMTLTFASPPQNKSDLETGP). A Mg(2+)-binding site is contributed by Asp93. Cys94 contributes to the Zn(2+) binding site. Positions 95 and 97 each coordinate Mg(2+). Zn(2+)-binding residues include Cys112 and Cys119.

The protein belongs to the PRA-CH family. In terms of assembly, homodimer. The cofactor is Mg(2+). Zn(2+) is required as a cofactor.

The protein localises to the cytoplasm. The enzyme catalyses 1-(5-phospho-beta-D-ribosyl)-5'-AMP + H2O = 1-(5-phospho-beta-D-ribosyl)-5-[(5-phospho-beta-D-ribosylamino)methylideneamino]imidazole-4-carboxamide. It participates in amino-acid biosynthesis; L-histidine biosynthesis; L-histidine from 5-phospho-alpha-D-ribose 1-diphosphate: step 3/9. Functionally, catalyzes the hydrolysis of the adenine ring of phosphoribosyl-AMP. In Sinorhizobium medicae (strain WSM419) (Ensifer medicae), this protein is Phosphoribosyl-AMP cyclohydrolase.